Reading from the N-terminus, the 889-residue chain is Exocyst complex component 1 (889 aa).

2 positions are modified to phosphoserine: Ser-145 and Ser-148. A coiled-coil region spans residues 156–269 (RAVQKTQHMD…GHVKETMEKI (114 aa)). Ser-456 bears the Phosphoserine mark.

The protein belongs to the SEC3 family. In terms of assembly, the exocyst complex is composed of Sec3/Exoc1, Sec5/Exoc2, Sec6/Exoc3, Sec8/Exoc4, Sec10/Exoc5, Sec15/Exoc6, Exo70/Exoc7 and Exo84/Exoc8.

Functionally, component of the exocyst complex involved in the docking of exocytic vesicles with fusion sites on the plasma membrane. This chain is Exocyst complex component 1, found in Drosophila melanogaster (Fruit fly).